A 364-amino-acid polypeptide reads, in one-letter code: Chorismate synthase (364 aa).

Positions 41-60 are disordered; sequence MQHDLDRRRPGTSRYTTARR. Residues Arg-48 and Arg-54 each contribute to the NADP(+) site. FMN-binding positions include 125-127, 238-239, Gly-278, 293-297, and Arg-319; these read RSS, NA, and KPTSS.

Belongs to the chorismate synthase family. As to quaternary structure, homotetramer. The cofactor is FMNH2.

The catalysed reaction is 5-O-(1-carboxyvinyl)-3-phosphoshikimate = chorismate + phosphate. It functions in the pathway metabolic intermediate biosynthesis; chorismate biosynthesis; chorismate from D-erythrose 4-phosphate and phosphoenolpyruvate: step 7/7. In terms of biological role, catalyzes the anti-1,4-elimination of the C-3 phosphate and the C-6 proR hydrogen from 5-enolpyruvylshikimate-3-phosphate (EPSP) to yield chorismate, which is the branch point compound that serves as the starting substrate for the three terminal pathways of aromatic amino acid biosynthesis. This reaction introduces a second double bond into the aromatic ring system. The protein is Chorismate synthase of Shewanella putrefaciens (strain CN-32 / ATCC BAA-453).